The sequence spans 782 residues: Nucleolar RNA helicase 2 (782 aa).

The segment at 1 to 184 is disordered; it reads MPGKLRSASK…IPVEQKEGAF (184 aa). 2 positions are modified to phosphoserine: S7 and S13. 2 stretches are compositionally biased toward basic and acidic residues: residues 26-42 and 99-117; these read PSEK…KTDE and EPLE…KAEE. K39 is modified (N6-acetyllysine). A Glycyl lysine isopeptide (Lys-Gly) (interchain with G-Cter in SUMO1); alternate cross-link involves residue K114. K114 is covalently cross-linked (Glycyl lysine isopeptide (Lys-Gly) (interchain with G-Cter in SUMO2); alternate). S119 carries the phosphoserine modification. Residues 134–143 are compositionally biased toward basic and acidic residues; it reads GKEANGDVGE. Position 135 is an N6-acetyllysine (K135). Phosphoserine is present on residues S145 and S169. Residues 172–181 show a composition bias toward basic and acidic residues; sequence EKEIPVEQKE. The Q motif motif lies at 182 to 210; sequence GAFSNFPISEETVKLLKARGVNFLFPIQA. A Helicase ATP-binding domain is found at 213-392; that stretch reads FHHVYSGKDL…KKYMKSTYEQ (180 aa). An ATP-binding site is contributed by 226 to 233; it reads ARTGTGKT. T292 is modified (phosphothreonine). A DEAD box motif is present at residues 335-338; that stretch reads DEVD. The Helicase C-terminal domain maps to 425-569; the sequence is DVIRVYSGHQ…GVPSATEIIK (145 aa). S563 bears the Phosphoserine mark. The residue at position 596 (K596) is an N6-acetyllysine. The segment at 704-782 is disordered; that stretch reads ATEQPELEGP…KRSFSKAFGQ (79 aa). A run of 3 repeats spans residues 720-724, 731-735, and 741-747. A 3 X 5 AA repeats region spans residues 720–747; sequence GRGQRDGSRGSFRGQRGGSRNFRGQGQR. Over residues 728–756 the composition is skewed to low complexity; it reads RGSFRGQRGGSRNFRGQGQRGGSRNFRGQ. K778 is modified (N6-acetyllysine).

The protein belongs to the DEAD box helicase family. DDX21/DDX50 subfamily. As to quaternary structure, homodimer; homodimerizes via its N-terminus. Found in a multi-helicase-TICAM1 complex at least composed of DHX36, DDX1, DDX21 and TICAM1; this complex exists in resting cells with or without poly(I:C) RNA ligand stimulation. Interacts (via C-terminus) with TICAM1 (via TIR domain). Interacts with DHX36 (via C-terminus); this interaction serves as bridges to TICAM1. Interacts (via C-terminus) with DDX1 (via B30.2/SPRY domain); this interaction serves as bridges to TICAM1. Component of the B-WICH complex, at least composed of SMARCA5/SNF2H, BAZ1B/WSTF, SF3B1, DEK, MYO1C, ERCC6, MYBBP1A and DDX21. Interacts with C1QBP. Interacts with JUN. Interacts with WDR46. Interacts with MCM3AP. Interacts with WDR43. Interacts with KPNA3. Interacts with GID4. Post-translationally, acetylation by CREBBP/CBP inhibits the helicase activity. Deacetylation by SIRT7 promotes the helicase activity and overcomes R-loop-mediated stalling of RNA polymerases.

The protein localises to the nucleus. It localises to the nucleolus. The protein resides in the nucleoplasm. It is found in the cytoplasm. Its subcellular location is the cytosol. The protein localises to the mitochondrion. It catalyses the reaction ATP + H2O = ADP + phosphate + H(+). With respect to regulation, acetylation inhibits the helicase activity. RNA helicase that acts as a sensor of the transcriptional status of both RNA polymerase (Pol) I and II: promotes ribosomal RNA (rRNA) processing and transcription from polymerase II (Pol II). Binds various RNAs, such as rRNAs, snoRNAs, 7SK and, at lower extent, mRNAs. In the nucleolus, localizes to rDNA locus, where it directly binds rRNAs and snoRNAs, and promotes rRNA transcription, processing and modification. Required for rRNA 2'-O-methylation, possibly by promoting the recruitment of late-acting snoRNAs SNORD56 and SNORD58 with pre-ribosomal complexes. In the nucleoplasm, binds 7SK RNA and is recruited to the promoters of Pol II-transcribed genes: acts by facilitating the release of P-TEFb from inhibitory 7SK snRNP in a manner that is dependent on its helicase activity, thereby promoting transcription of its target genes. Functions as a cofactor for JUN-activated transcription: required for phosphorylation of JUN at 'Ser-77'. Can unwind double-stranded RNA (helicase) and can fold or introduce a secondary structure to a single-stranded RNA (foldase). Together with SIRT7, required to prevent R-loop-associated DNA damage and transcription-associated genomic instability: deacetylation by SIRT7 activates the helicase activity, thereby overcoming R-loop-mediated stalling of RNA polymerases. Involved in rRNA processing. May bind to specific miRNA hairpins. Component of a multi-helicase-TICAM1 complex that acts as a cytoplasmic sensor of viral double-stranded RNA (dsRNA) and plays a role in the activation of a cascade of antiviral responses including the induction of pro-inflammatory cytokines via the adapter molecule TICAM1. The protein is Nucleolar RNA helicase 2 (Ddx21) of Rattus norvegicus (Rat).